The following is a 782-amino-acid chain: General transcription and DNA repair factor IIH helicase/translocase subunit XPB (782 aa).

A compositionally biased stretch (basic and acidic residues) spans 1–11; that stretch reads MGKRDRADREK. The disordered stretch occupies residues 1 to 51; it reads MGKRDRADREKKKSKKRHYEDEEDEEDDAPGNDTQEAVPSAAGKQVDESGT. The Nuclear localization signal signature appears at 6–18; the sequence is RADREKKKSKKRH. Acidic residues predominate over residues 21-30; sequence DEEDEEDDAP. In terms of domain architecture, Helicase ATP-binding spans 327 to 488; that stretch reads MFGNGRARSG…DLNFLIGPKL (162 aa). 340–347 serves as a coordination point for ATP; sequence LPCGAGKS. Positions 441 to 444 match the DEVH box motif; that stretch reads DEVH. Residues 542 to 702 form the Helicase C-terminal domain; sequence RACQFLIKFH…LAGMEEEDLA (161 aa). Residue S686 is modified to Phosphoserine. S751 bears the Phosphoserine; by CK2 mark.

This sequence belongs to the helicase family. RAD25/XPB subfamily. In terms of assembly, component of the 7-subunit TFIIH core complex composed of XPB/ERCC3, XPD/ERCC2, GTF2H1, GTF2H2, GTF2H3, GTF2H4 and GTF2H5, which is active in NER. The core complex associates with the 3-subunit CDK-activating kinase (CAK) module composed of CCNH/cyclin H, CDK7 and MNAT1 to form the 10-subunit holoenzyme (holo-TFIIH) active in transcription. Interacts with PUF60. Interacts with ATF7IP. Interacts with KAT2A; leading to KAT2A recruitment to promoters and acetylation of histones. Part of TBP-based Pol II pre-initiation complex (PIC), in which Pol II core assembles with general transcription factors and other specific initiation factors including GTF2E1, GTF2E2, GTF2F1, GTF2F2, TCEA1, ERCC2, ERCC3, GTF2H2, GTF2H3, GTF2H4, GTF2H5, GTF2A1, GTF2A2, GTF2B and TBP; this large multi-subunit PIC complex mediates DNA unwinding and targets Pol II core to the transcription start site where the first phosphodiester bond forms. Post-translationally, phosphorylation on Ser-751 by CK2 controls the 5'-excision activity of ERCC1-XPF endonuclease; phosphorylated protein inhibits the excision activity and thus NER. Dephosphorylation reactivates the 5'-excision step. Phosphorylation has no effect on transcription or the 3'-5' helicase activity.

It localises to the nucleus. The enzyme catalyses Couples ATP hydrolysis with the unwinding of duplex DNA by translocating in the 3'-5' direction.. It catalyses the reaction ATP + H2O = ADP + phosphate + H(+). Phosphorylation on Ser-751 by CK2 controls the 5'-excision activity of ERCC1-XPF endonuclease; phosphorylated protein inhibits the excision activity and thus NER. ATPase activity is stimulated by TFIIH subunit p52 (GTF2H4). DNA translocase activity by this subunit in TFIIH is stimulated by XPA, ERCC5/XPG and XFP plus ERCC1. ATP-dependent 3'-5' DNA helicase/translocase; binds dsDNA rather than ssDNA, unzipping it in a translocase rather than classical helicase activity. Component of the general transcription and DNA repair factor IIH (TFIIH) core complex. When complexed to CDK-activating kinase (CAK), involved in RNA transcription by RNA polymerase II. The ATPase activity of XPB/ERCC3, but not its helicase activity, is required for DNA opening; it may wrap around the damaged DNA wedging it open, causing localized melting and twisting that allows XPD/ERCC2 helicase to anchor. The ATP-dependent helicase activity of XPB/ERCC3 may be required for promoter escape. Also involved in transcription-coupled nucleotide excision repair (NER) of damaged DNA. In NER, TFIIH acts by opening DNA around the lesion to allow the excision of the damaged oligonucleotide and its replacement by a new DNA fragment. The structure of the TFIIH transcription complex differs from the NER-TFIIH complex; large movements by XPD/ERCC2 and XPB/ERCC3 are stabilized by XPA. The polypeptide is General transcription and DNA repair factor IIH helicase/translocase subunit XPB (ERCC3) (Bos taurus (Bovine)).